The chain runs to 323 residues: tRNA dimethylallyltransferase (323 aa).

15-22 (GATGSGKT) is a binding site for ATP. Residue 17–22 (TGSGKT) participates in substrate binding. 2 interaction with substrate tRNA regions span residues 40–43 (DSRQ) and 164–168 (QRLIR).

The protein belongs to the IPP transferase family. In terms of assembly, monomer. Mg(2+) is required as a cofactor.

The enzyme catalyses adenosine(37) in tRNA + dimethylallyl diphosphate = N(6)-dimethylallyladenosine(37) in tRNA + diphosphate. Functionally, catalyzes the transfer of a dimethylallyl group onto the adenine at position 37 in tRNAs that read codons beginning with uridine, leading to the formation of N6-(dimethylallyl)adenosine (i(6)A). The protein is tRNA dimethylallyltransferase of Chloroherpeton thalassium (strain ATCC 35110 / GB-78).